Here is a 71-residue protein sequence, read N- to C-terminus: SPI-2 type 3 secretion system needle filament protein (71 aa).

It belongs to the SctF family. In terms of assembly, the core secretion machinery of the T3SS is composed of approximately 20 different proteins, including cytoplasmic components, a base, an export apparatus and a needle. This subunit polymerizes and forms the helical needle filament.

The protein resides in the secreted. It localises to the cell surface. Functionally, component of the type III secretion system (T3SS), also called injectisome, which is used to inject bacterial effector proteins into eukaryotic host cells. SsaG/SctF2 forms the external needle filament that protrudes from the bacterial surface. Its function is as follows. During infection, can induce innate immune responses. The needle proteins interact with host TLR2 or TLR4, and induce signaling by NF-kappa-B and/or AP-1. This activation is MyD88 dependent and results in increased expression of cytokines, including TNF-alpha, IL-6 and IL-8. The polypeptide is SPI-2 type 3 secretion system needle filament protein (Salmonella typhimurium (strain LT2 / SGSC1412 / ATCC 700720)).